The chain runs to 120 residues: Peptidyl-tRNA hydrolase (120 aa).

The protein belongs to the PTH2 family. As to quaternary structure, homodimer.

The protein resides in the cytoplasm. It catalyses the reaction an N-acyl-L-alpha-aminoacyl-tRNA + H2O = an N-acyl-L-amino acid + a tRNA + H(+). Functionally, the natural substrate for this enzyme may be peptidyl-tRNAs which drop off the ribosome during protein synthesis. This is Peptidyl-tRNA hydrolase from Saccharolobus solfataricus (strain ATCC 35092 / DSM 1617 / JCM 11322 / P2) (Sulfolobus solfataricus).